The following is a 145-amino-acid chain: Large ribosomal subunit protein uL15 (145 aa).

The segment covering 1–30 (MAHSLRKTRKLRGHVSHGHGRIGKHRKHPG) has biased composition (basic residues). The disordered stretch occupies residues 1–48 (MAHSLRKTRKLRGHVSHGHGRIGKHRKHPGGRGNAGGQHHHRINRDKY).

This sequence belongs to the universal ribosomal protein uL15 family. In terms of assembly, component of the large ribosomal subunit.

The protein localises to the cytoplasm. It is found in the cytosol. Its subcellular location is the rough endoplasmic reticulum. In terms of biological role, component of the large ribosomal subunit. This Oscheius tipulae protein is Large ribosomal subunit protein uL15 (rpl-27a).